Consider the following 528-residue polypeptide: GTPase Der (528 aa).

Acidic residues-rich tracts occupy residues 1-12 (MDVEGAFADEEE) and 30-62 (GYDDDFAPDDSDEDEDDDDYEFDEDDFAAPDFG). The interval 1 to 62 (MDVEGAFADE…EDDFAAPDFG (62 aa)) is disordered. 2 EngA-type G domains span residues 90-253 (CTVA…PEEP) and 263-436 (RRVA…ENWD). Residues 96 to 103 (GRPNVGKS), 143 to 147 (DTGGW), 205 to 208 (NKFD), 269 to 276 (GKPNVGKS), 316 to 320 (DTAGL), and 381 to 384 (NKWD) each bind GTP. A KH-like domain is found at 437–519 (RRVSTGQLNN…PIRIAVRVRE (83 aa)).

This sequence belongs to the TRAFAC class TrmE-Era-EngA-EngB-Septin-like GTPase superfamily. EngA (Der) GTPase family. Associates with the 50S ribosomal subunit.

Its function is as follows. GTPase that plays an essential role in the late steps of ribosome biogenesis. This Corynebacterium efficiens (strain DSM 44549 / YS-314 / AJ 12310 / JCM 11189 / NBRC 100395) protein is GTPase Der.